A 545-amino-acid polypeptide reads, in one-letter code: Ribulokinase (545 aa).

It belongs to the ribulokinase family.

The enzyme catalyses D-ribulose + ATP = D-ribulose 5-phosphate + ADP + H(+). It catalyses the reaction L-ribulose + ATP = L-ribulose 5-phosphate + ADP + H(+). It functions in the pathway carbohydrate degradation; L-arabinose degradation via L-ribulose; D-xylulose 5-phosphate from L-arabinose (bacterial route): step 2/3. The chain is Ribulokinase from Staphylococcus aureus (strain USA300).